Consider the following 219-residue polypeptide: Probable transaldolase (219 aa).

Lys83 serves as the catalytic Schiff-base intermediate with substrate.

This sequence belongs to the transaldolase family. Type 3B subfamily.

It localises to the cytoplasm. It carries out the reaction D-sedoheptulose 7-phosphate + D-glyceraldehyde 3-phosphate = D-erythrose 4-phosphate + beta-D-fructose 6-phosphate. Its pathway is carbohydrate degradation; pentose phosphate pathway; D-glyceraldehyde 3-phosphate and beta-D-fructose 6-phosphate from D-ribose 5-phosphate and D-xylulose 5-phosphate (non-oxidative stage): step 2/3. Transaldolase is important for the balance of metabolites in the pentose-phosphate pathway. The sequence is that of Probable transaldolase from Cereibacter sphaeroides (strain ATCC 17025 / ATH 2.4.3) (Rhodobacter sphaeroides).